The chain runs to 59 residues: Large ribosomal subunit protein uL30 (59 aa).

Belongs to the universal ribosomal protein uL30 family. Part of the 50S ribosomal subunit.

This chain is Large ribosomal subunit protein uL30, found in Persephonella marina (strain DSM 14350 / EX-H1).